A 178-amino-acid chain; its full sequence is MSKTGGKISFYEDRNFQGRRYDCDCDCADFRSYLSRCNSIRVEGGTWAVYERPNFSGHMYILPQGEYPEYQRWMGLNDRLGSCRAVHLSSGGQAKIQVFEKGDFNGQMYETTEDCPSIMEQFHLREIHSCKVVEGTWIFYELPNYRGRQYLLDKKEYRKPVDWGAASPAIQSFRRIVE.

The residue at position 2 (Ser2) is an N-acetylserine. The tract at residues 2-5 (SKTG) is N-terminal arm. Beta/gamma crystallin 'Greek key' domains follow at residues 6 to 44 (GKIS…RVEG) and 45 to 87 (GTWA…RAVH). The interval 88-93 (LSSGGQ) is connecting peptide. Beta/gamma crystallin 'Greek key' domains are found at residues 94-134 (AKIQ…KVVE) and 135-177 (GTWI…RRIV).

Belongs to the beta/gamma-crystallin family. As to quaternary structure, monomer.

Crystallins are the dominant structural components of the vertebrate eye lens. The sequence is that of Gamma-crystallin S (Crygs) from Mus musculus (Mouse).